A 90-amino-acid polypeptide reads, in one-letter code: DNA-binding protein HU-beta (90 aa).

This sequence belongs to the bacterial histone-like protein family. As to quaternary structure, heterodimer of an alpha and a beta chain.

Histone-like DNA-binding protein which is capable of wrapping DNA to stabilize it, and thus to prevent its denaturation under extreme environmental conditions. This Salmonella typhi protein is DNA-binding protein HU-beta (hupB).